The primary structure comprises 175 residues: Adenine phosphoribosyltransferase (175 aa).

Belongs to the purine/pyrimidine phosphoribosyltransferase family. As to quaternary structure, homodimer.

Its subcellular location is the cytoplasm. The enzyme catalyses AMP + diphosphate = 5-phospho-alpha-D-ribose 1-diphosphate + adenine. The protein operates within purine metabolism; AMP biosynthesis via salvage pathway; AMP from adenine: step 1/1. Its function is as follows. Catalyzes a salvage reaction resulting in the formation of AMP, that is energically less costly than de novo synthesis. The polypeptide is Adenine phosphoribosyltransferase (Caldicellulosiruptor saccharolyticus (strain ATCC 43494 / DSM 8903 / Tp8T 6331)).